A 337-amino-acid polypeptide reads, in one-letter code: Large ribosomal subunit protein uL3 (337 aa).

The tract at residues 1 to 20 (MASIHRPKRGSLAFSPRKRA) is disordered.

This sequence belongs to the universal ribosomal protein uL3 family. As to quaternary structure, part of the 50S ribosomal subunit. Forms a cluster with proteins L14 and L24e.

One of the primary rRNA binding proteins, it binds directly near the 3'-end of the 23S rRNA, where it nucleates assembly of the 50S subunit. The sequence is that of Large ribosomal subunit protein uL3 from Methanosarcina mazei (strain ATCC BAA-159 / DSM 3647 / Goe1 / Go1 / JCM 11833 / OCM 88) (Methanosarcina frisia).